We begin with the raw amino-acid sequence, 233 residues long: Orotidine 5'-phosphate decarboxylase (233 aa).

Residues Asp-11, Lys-34, 61 to 70 (DLKLHDIPNT), Thr-117, Arg-179, Gln-189, Gly-209, and Arg-210 each bind substrate. Residue Lys-63 is the Proton donor of the active site.

This sequence belongs to the OMP decarboxylase family. Type 1 subfamily. Homodimer.

The catalysed reaction is orotidine 5'-phosphate + H(+) = UMP + CO2. Its pathway is pyrimidine metabolism; UMP biosynthesis via de novo pathway; UMP from orotate: step 2/2. In terms of biological role, catalyzes the decarboxylation of orotidine 5'-monophosphate (OMP) to uridine 5'-monophosphate (UMP). The polypeptide is Orotidine 5'-phosphate decarboxylase (Streptococcus agalactiae serotype V (strain ATCC BAA-611 / 2603 V/R)).